We begin with the raw amino-acid sequence, 256 residues long: Small ribosomal subunit protein eS1 (256 aa).

Alanine 2 is modified (N-acetylalanine; partial).

The protein belongs to the eukaryotic ribosomal protein eS1 family. In terms of assembly, component of the small ribosomal subunit. Mature ribosomes consist of a small (40S) and a large (60S) subunit. The 40S subunit contains about 33 different proteins and 1 molecule of RNA (18S). The 60S subunit contains about 49 different proteins and 3 molecules of RNA (25S, 5.8S and 5S).

The protein resides in the cytoplasm. The chain is Small ribosomal subunit protein eS1 (rps1) from Botryotinia fuckeliana (strain B05.10) (Noble rot fungus).